The sequence spans 47 residues: Delta-ctenitoxin-Asp2e (47 aa).

Intrachain disulfides connect cysteine 3–cysteine 17, cysteine 10–cysteine 23, cysteine 14–cysteine 46, cysteine 16–cysteine 31, and cysteine 25–cysteine 29.

As to expression, expressed by the venom gland.

The protein resides in the secreted. Its function is as follows. Inhibits the inactivation of voltage-gated sodium channels (Nav). In Ancylometes sp. (South American fishing spider), this protein is Delta-ctenitoxin-Asp2e.